The primary structure comprises 309 residues: Protein EXORDIUM-like 1 (309 aa).

Positions Met1–Thr23 are cleaved as a signal peptide.

This sequence belongs to the EXORDIUM family.

It localises to the secreted. The protein resides in the extracellular space. Its subcellular location is the apoplast. Its function is as follows. May play a role in a brassinosteroid-dependent regulatory pathway that controls growth and development under low carbon and energy availability. In Arabidopsis thaliana (Mouse-ear cress), this protein is Protein EXORDIUM-like 1 (EXL1).